The following is a 339-amino-acid chain: Glycerol-3-phosphate dehydrogenase [NAD(P)+] (339 aa).

NADPH is bound by residues Ser15, Tyr16, His36, and Lys110. 3 residues coordinate sn-glycerol 3-phosphate: Lys110, Gly139, and Thr141. Residue Ala143 coordinates NADPH. Residues Lys195, Asp248, Ser258, Arg259, and Asn260 each coordinate sn-glycerol 3-phosphate. Lys195 (proton acceptor) is an active-site residue. Residue Arg259 coordinates NADPH. The NADPH site is built by Val283 and Glu285.

This sequence belongs to the NAD-dependent glycerol-3-phosphate dehydrogenase family.

Its subcellular location is the cytoplasm. It catalyses the reaction sn-glycerol 3-phosphate + NAD(+) = dihydroxyacetone phosphate + NADH + H(+). The catalysed reaction is sn-glycerol 3-phosphate + NADP(+) = dihydroxyacetone phosphate + NADPH + H(+). It participates in membrane lipid metabolism; glycerophospholipid metabolism. In terms of biological role, catalyzes the reduction of the glycolytic intermediate dihydroxyacetone phosphate (DHAP) to sn-glycerol 3-phosphate (G3P), the key precursor for phospholipid synthesis. The chain is Glycerol-3-phosphate dehydrogenase [NAD(P)+] from Escherichia fergusonii (strain ATCC 35469 / DSM 13698 / CCUG 18766 / IAM 14443 / JCM 21226 / LMG 7866 / NBRC 102419 / NCTC 12128 / CDC 0568-73).